A 415-amino-acid chain; its full sequence is Corticotropin-releasing factor receptor 1 (415 aa).

The first 23 residues, 1–23 (MGRRPQLRLVKALLLLGLNSISA), serve as a signal peptide directing secretion. Residues 24 to 111 (SLQDQHCESL…CQEILSEGEK (88 aa)) lie on the Extracellular side of the membrane. Intrachain disulfides connect C30–C54, C44–C87, and C68–C102. Residues N38, N45, N51, N78, N90, and N98 are each glycosylated (N-linked (GlcNAc...) asparagine). Residues 99–108 (HSECQEILSE) form an important for peptide agonist binding region. A helical transmembrane segment spans residues 112 to 142 (SKAHYHIAVIINYLGHCISLAALLVAFVLFL). The Cytoplasmic portion of the chain corresponds to 143–149 (RLRSIRC). A helical membrane pass occupies residues 150-174 (VRNIIHWNLISAFILRNATWFVVQL). Topologically, residues 175–189 (TMSPEVHQSNVGWCR) are extracellular. Residues C188 and C258 are joined by a disulfide bond. Residues 190 to 218 (LVTAAYNYFHVTNFFWMFGEGCYLHTAVV) form a helical membrane-spanning segment. Residues 219 to 225 (LTYSTDR) are Cytoplasmic-facing. A helical membrane pass occupies residues 226–253 (LRKWMFICIGWGVPFPIIVAWAIGKLYY). The Extracellular segment spans residues 254 to 269 (DNEKCWFGKRPGVYTD). A helical transmembrane segment spans residues 270-295 (YIYQGPMILVLLINFIFLFNIVRILM). The tract at residues 280–290 (LLINFIFLFNI) is important for antagonist binding. Residues 296–306 (TKLRASTTSET) are Cytoplasmic-facing. At S301 the chain carries Phosphoserine; by PKA. The chain crosses the membrane as a helical span at residues 307-331 (IQYRKAVKATLVLLPLLGITYMLFF). The Extracellular portion of the chain corresponds to 332–338 (VNPGEDE). The chain crosses the membrane as a helical span at residues 339-368 (VSRVVFIYFNSFLESFQGFFVSVFYCFLNS). Residues 369-415 (EVRSAIRKRWHRWQDKHSIRARVARAMSIPTSPTRVSFHSIKQSTAV) are Cytoplasmic-facing.

This sequence belongs to the G-protein coupled receptor 2 family. In terms of assembly, heterodimer; heterodimerizes with GPER1. Interacts (via N-terminal extracellular domain) with CRH and UCN. Interacts with DLG1; this inhibits endocytosis of CRHR1 after agonist binding. Post-translationally, C-terminal Ser or Thr residues may be phosphorylated. Phosphorylation at Ser-301 by PKA prevents maximal coupling to Gq-protein, and thereby negatively regulates downstream signaling.

The protein localises to the cell membrane. The protein resides in the endosome. Functionally, G-protein coupled receptor for CRH (corticotropin-releasing factor) and UCN (urocortin). Has high affinity for CRH and UCN. Ligand binding causes a conformation change that triggers signaling via guanine nucleotide-binding proteins (G proteins) and down-stream effectors, such as adenylate cyclase. Promotes the activation of adenylate cyclase, leading to increased intracellular cAMP levels. Inhibits the activity of the calcium channel CACNA1H. Required for normal embryonic development of the adrenal gland and for normal hormonal responses to stress. Plays a role in the response to anxiogenic stimuli. The protein is Corticotropin-releasing factor receptor 1 (CRHR1) of Ovis aries (Sheep).